Consider the following 568-residue polypeptide: MPGTDLLKLKDFEPYLEILESYSTKAKNYVNGYCTKYEPWQLIAWSVLCTLLIVWVYELIFQPESLWSRFKKKLFKLIRKMPFIGRKIEQQVSKAKKDLVKNMPFLKVDKDYVKTLPAQGMGTAEVLERLKEYSSMDGSWQEGKASGAVYNGEPKLTELLVQAYGEFTWSNPLHPDIFPGLRKLEAEIVRMTCSLFNGGPDSCGCVTSGGTESILMACKAYRDLALEKGIKTPEIVAPESAHAAFDKAAHYFGMKIVRVALKKNMEVDVQAMKRAISRNTAMLVCSTPQFPHGVMDPVPEVAKLAVRYKIPLHVDACLGGFLIVFMEKAGYPLEKPFDFRVKGVTSISADTHKYGYAPKGSSVVMYSNEKYRTYQFFVGADWQGGVYASPSIAGSRPGGIIAACWAALMHFGENGYVEATKQIIKTARFLKSELENIKNIFIFGDPQLSVIALGSNDFDIYRLSNMMSAKGWNFNYLQFPRSIHFCITLVHTRKRVAIQFLKDIRESVTQIMKNPKAKTTGMGAIYGMAQATIDRKLVAEISSVFLDCLYTTDPVTQGNQMNGSPKPR.

Topologically, residues 1 to 40 (MPGTDLLKLKDFEPYLEILESYSTKAKNYVNGYCTKYEPW) are lumenal. The helical; Signal-anchor for type III membrane protein transmembrane segment at 41-61 (QLIAWSVLCTLLIVWVYELIF) threads the bilayer. Residues 62–568 (QPESLWSRFK…NQMNGSPKPR (507 aa)) lie on the Cytoplasmic side of the membrane. Residue lysine 353 is modified to N6-(pyridoxal phosphate)lysine; alternate. Lysine 353 is modified (N6-acetyllysine; alternate). Tyrosine 356 and tyrosine 366 each carry 3'-nitrotyrosine. The residue at position 564 (serine 564) is a Phosphoserine.

The protein belongs to the group II decarboxylase family. Sphingosine-1-phosphate lyase subfamily. Pyridoxal 5'-phosphate serves as cofactor. As to expression, highest levels are found in liver, small intestine and thymus, followed by kidney, lung, heart, spleen and brain (at protein level). Also detected in stomach, testis and skeletal muscle (at protein level).

The protein localises to the endoplasmic reticulum membrane. The catalysed reaction is sphinganine 1-phosphate = hexadecanal + phosphoethanolamine. It catalyses the reaction sphing-4-enine 1-phosphate = (2E)-hexadecenal + phosphoethanolamine. It functions in the pathway lipid metabolism; sphingolipid metabolism. In terms of biological role, cleaves phosphorylated sphingoid bases (PSBs), such as sphingosine-1-phosphate, into fatty aldehydes and phosphoethanolamine. Elevates stress-induced ceramide production and apoptosis. Required for global lipid homeostasis in liver and cholesterol homeostasis in fibroblasts. Involved in the regulation of pro-inflammatory response and neutrophil trafficking. Modulates neuronal autophagy via phosphoethanolamine production which regulates accumulation of aggregate-prone proteins such as APP. Seems to play a role in establishing neuronal contact sites and axonal maintenance. The sequence is that of Sphingosine-1-phosphate lyase 1 from Mus musculus (Mouse).